We begin with the raw amino-acid sequence, 192 residues long: Phosphoheptose isomerase (192 aa).

In terms of domain architecture, SIS spans 37-192 (LADSFKAGGK…IQLIEKEMAK (156 aa)). 52–54 (NGG) contributes to the substrate binding site. Residues histidine 61 and glutamate 65 each contribute to the Zn(2+) site. Substrate contacts are provided by residues glutamate 65, 93-94 (ND), 119-121 (STS), serine 124, and glutamine 172. The Zn(2+) site is built by glutamine 172 and histidine 180.

Belongs to the SIS family. GmhA subfamily. Homotetramer. It depends on Zn(2+) as a cofactor.

It localises to the cytoplasm. The enzyme catalyses 2 D-sedoheptulose 7-phosphate = D-glycero-alpha-D-manno-heptose 7-phosphate + D-glycero-beta-D-manno-heptose 7-phosphate. The protein operates within carbohydrate biosynthesis; D-glycero-D-manno-heptose 7-phosphate biosynthesis; D-glycero-alpha-D-manno-heptose 7-phosphate and D-glycero-beta-D-manno-heptose 7-phosphate from sedoheptulose 7-phosphate: step 1/1. Functionally, catalyzes the isomerization of sedoheptulose 7-phosphate in D-glycero-D-manno-heptose 7-phosphate. In Escherichia fergusonii (strain ATCC 35469 / DSM 13698 / CCUG 18766 / IAM 14443 / JCM 21226 / LMG 7866 / NBRC 102419 / NCTC 12128 / CDC 0568-73), this protein is Phosphoheptose isomerase.